The primary structure comprises 153 residues: Endoribonuclease YbeY (153 aa).

3 residues coordinate Zn(2+): H114, H118, and H124.

This sequence belongs to the endoribonuclease YbeY family. The cofactor is Zn(2+).

Its subcellular location is the cytoplasm. In terms of biological role, single strand-specific metallo-endoribonuclease involved in late-stage 70S ribosome quality control and in maturation of the 3' terminus of the 16S rRNA. This is Endoribonuclease YbeY from Shewanella baltica (strain OS155 / ATCC BAA-1091).